The chain runs to 77 residues: Large ribosomal subunit protein uL29 (77 aa).

The protein belongs to the universal ribosomal protein uL29 family.

In Mycobacterium bovis (strain ATCC BAA-935 / AF2122/97), this protein is Large ribosomal subunit protein uL29 (rpmC).